The sequence spans 449 residues: Galactosyl transferase CpsE (449 aa).

The next 5 helical transmembrane spans lie at 5-22 (VVVY…TPNF), 27-46 (DLLF…DFYR), 59-78 (MVLK…FFIF), 88-107 (SFFT…NSFL), and 258-280 (FLDI…FLVP).

This sequence belongs to the bacterial sugar transferase family.

It is found in the cell membrane. Galactosyl transferase is essential for the assembly of the group B streptococci (GBS) type III capsular polysaccharide. May be involved in the formation of either or both galactosidic bonds by catalyzing the addition of galactose to an oligosaccharide precursor or to a lipid intermediate. Type III capsular polysaccharide consists of a linear backbone with short side chains ending in residues of N-acetylneuraminic acid or sialic acid. The presence of sialic acid on the surface of the organism inhibits activation of the alternative pathway of complement and is thought to be an important element in the virulence function of the capsule. This is Galactosyl transferase CpsE (cpsE) from Streptococcus agalactiae serotype III (strain NEM316).